The primary structure comprises 385 residues: Flavin-dependent monooxygenase (385 aa).

FAD contacts are provided by residues 12–15, 34–36, 44–47, arginine 105, tyrosine 267, aspartate 289, and 296–302; these read ASIA, EKN, YAID, and PLSGQGT.

The protein belongs to the aromatic-ring hydroxylase family. FAD serves as cofactor.

It carries out the reaction 7-chlorotetracycline + NADPH + O2 + H(+) = (1S,10S,10aS)-3-(CONH2)-9-Cl-1-(Me2N)-3,3a,4,10-(HO)4-10-Me-2,5-dioxo-1H,10aH,11H,11aH-cyclopenta[b]anthracen-6-olate + CO + NADP(+) + H2O. The catalysed reaction is a tetracycline + NADPH + O2 + H(+) = a (1S,10aS)-3-(CONH2)-1-(Me2N)-3,3a,4,6-(HO)4-2,5-dioxo-1H,10aH,11H,11aH-cyclopenta[b]anthracene + CO + NADP(+) + H2O. With respect to regulation, inhibited by anhydrotetracycline. An FAD-requiring monooxygenase active on tetracycline antibiotic and some of its derivatives, which leads to their inactivation. Expression in E.coli confers high resistance to oxytetracycline, slightly less resistance to tetracycline, moderate resistance to minocycline but no resistance to tigecycline. Degrades tetracycline and oxytetracycline; the reaction requires NADPH. Degrades and confers resistance to chlortetracycline. This Unknown prokaryotic organism protein is Flavin-dependent monooxygenase.